The chain runs to 237 residues: ATP synthase subunit a (237 aa).

5 helical membrane passes run 18–38 (LTLL…VYWA), 77–97 (SLFL…GLMA), 114–134 (NIAF…VEGI), 167–187 (LALR…LLVT), and 208–230 (AFSV…MYLG).

Belongs to the ATPase A chain family. As to quaternary structure, F-type ATPases have 2 components, CF(1) - the catalytic core - and CF(0) - the membrane proton channel. CF(1) has five subunits: alpha(3), beta(3), gamma(1), delta(1), epsilon(1). CF(0) has three main subunits: a(1), b(2) and c(9-12). The alpha and beta chains form an alternating ring which encloses part of the gamma chain. CF(1) is attached to CF(0) by a central stalk formed by the gamma and epsilon chains, while a peripheral stalk is formed by the delta and b chains.

The protein localises to the cell membrane. In terms of biological role, key component of the proton channel; it plays a direct role in the translocation of protons across the membrane. The sequence is that of ATP synthase subunit a from Streptococcus gordonii (strain Challis / ATCC 35105 / BCRC 15272 / CH1 / DL1 / V288).